A 214-amino-acid polypeptide reads, in one-letter code: Probable nicotinate-nucleotide adenylyltransferase (214 aa).

The protein belongs to the NadD family.

The catalysed reaction is nicotinate beta-D-ribonucleotide + ATP + H(+) = deamido-NAD(+) + diphosphate. The protein operates within cofactor biosynthesis; NAD(+) biosynthesis; deamido-NAD(+) from nicotinate D-ribonucleotide: step 1/1. Functionally, catalyzes the reversible adenylation of nicotinate mononucleotide (NaMN) to nicotinic acid adenine dinucleotide (NaAD). The sequence is that of Probable nicotinate-nucleotide adenylyltransferase from Mycobacterium tuberculosis (strain ATCC 25177 / H37Ra).